The primary structure comprises 80 residues: UPF0154 protein SaurJH1_1431 (80 aa).

A helical transmembrane segment spans residues 4–24 (WLAIIFIVAALILGLIGGFLL).

The protein belongs to the UPF0154 family.

The protein localises to the cell membrane. The sequence is that of UPF0154 protein SaurJH1_1431 from Staphylococcus aureus (strain JH1).